Consider the following 761-residue polypeptide: Mitochondrial inner membrane m-AAA protease component YTA10 (761 aa).

Over 1–115 (MMMWQRYARG…SLSEYFRSKE (115 aa)) the chain is Mitochondrial matrix. The interval 67-101 (SWTRLNENRPNKEGEGKNNGNKDNNSNKEDGKDKR) is disordered. 2 stretches are compositionally biased toward basic and acidic residues: residues 72-82 (NENRPNKEGEG) and 91-101 (NSNKEDGKDKR). A helical membrane pass occupies residues 116-136 (FANTMFLTIGFTIIFTLLTPS). The Mitochondrial intermembrane portion of the chain corresponds to 137-223 (SNNSGDDSNR…IPIKYIERSS (87 aa)). Residues 224 to 244 (PFTFLFPFLPTIILLGGLYFI) traverse the membrane as a helical segment. The Mitochondrial matrix segment spans residues 245–761 (TRKINSSPPN…EPPEAPAATN (517 aa)). Residues V290, A291, T332, G333, K334, T335, L336, and H472 each contribute to the ATP site. H558 contributes to the Zn(2+) binding site. E559 is a catalytic residue. Zn(2+) contacts are provided by H562 and D634.

In the N-terminal section; belongs to the AAA ATPase family. This sequence in the C-terminal section; belongs to the peptidase M41 family. Component of the 850 kDa m-AAA protease complex, a heterohexamer composed of YTA12/RCA1 and YTA10/AFG3. Associates with the prohibitin complex, composed of PHB1 and PHB2, inhibiting the activity of the m-AAA protease complex. Requires Zn(2+) as cofactor.

Its subcellular location is the mitochondrion inner membrane. It catalyses the reaction ATP + H2O = ADP + phosphate + H(+). With respect to regulation, ATP hydrolysis is coordinated within m-AAA protease ring complexes: ATP-binding to YTA10/AFG3 inhibits ATP hydrolysis by the neighboring subunit YTA12/RCA1, leading to coordinated ATP hydrolysis within the AAA ATPase ring. Functionally, catalytic component of the m-AAA protease, a protease that plays a key role in proteostasis of inner mitochondrial membrane proteins. YTA10/AFG3 possesses both ATPase and protease activities: the ATPase activity is required to unfold substrates, threading them into the internal proteolytic cavity for hydrolysis into small peptide fragments. The complex is necessary for the assembly of mitochondrial respiratory chain and ATPase complexes. The m-AAA protease carries out protein quality control in the inner membrane of the mitochondria by mediating degradation of mistranslated or misfolded polypeptides. It also mediates protein maturation of the mitochondrial ribosomal subunit MRPL32/bL32m by catalyzing the cleavage of the presequence of MRPL32/bL32m prior to assembly into the mitochondrial ribosome. Promotes maturation of cytochrome c peroxidase (CCP1) by acting as a membrane protein dislocase via its ATPase activity: pulls the CCP1 transmembrane to the matrix prior to processing by the rhomboid protease PCP1. The membrane protein dislocase activity is also required to dislocate moderately hydrophobic transmembrane segments from the membrane. This is Mitochondrial inner membrane m-AAA protease component YTA10 from Saccharomyces cerevisiae (strain ATCC 204508 / S288c) (Baker's yeast).